The chain runs to 277 residues: Putative thiosulfate sulfurtransferase (277 aa).

Rhodanese domains are found at residues 18–125 (KAPK…PLSA) and 154–274 (AIGT…APIE). Lys67 participates in a covalent cross-link: Isoglutamyl lysine isopeptide (Lys-Gln) (interchain with Q-Cter in protein Pup). Residue Cys233 is the Cysteine persulfide intermediate of the active site. Arg238 provides a ligand contact to substrate.

The catalysed reaction is thiosulfate + hydrogen cyanide = thiocyanate + sulfite + 2 H(+). May be a sulfotransferase involved in the formation of thiosulfate. This is Putative thiosulfate sulfurtransferase from Mycolicibacterium smegmatis (strain ATCC 700084 / mc(2)155) (Mycobacterium smegmatis).